A 421-amino-acid polypeptide reads, in one-letter code: Anhydromevalonate phosphate decarboxylase (421 aa).

Mn(2+) is bound by residues asparagine 131 and glutamate 194. Aspartate 240 (proton acceptor) is an active-site residue.

This sequence belongs to the UbiD family. The cofactor is prenylated FMN. Mn(2+) serves as cofactor.

The enzyme catalyses (2E)-3-methyl-5-phosphooxypent-2-enoate + H(+) = isopentenyl phosphate + CO2. Its pathway is isoprenoid biosynthesis; isopentenyl diphosphate biosynthesis via mevalonate pathway. Its function is as follows. Catalyzes the conversion of trans-anhydromevalonate 5-phosphate (tAHMP) into isopentenyl phosphate. Involved in the archaeal mevalonate (MVA) pathway, which provides fundamental precursors for isoprenoid biosynthesis, such as isopentenyl diphosphate (IPP) and dimethylallyl diphosphate (DMAPP). The sequence is that of Anhydromevalonate phosphate decarboxylase from Methanocaldococcus jannaschii (strain ATCC 43067 / DSM 2661 / JAL-1 / JCM 10045 / NBRC 100440) (Methanococcus jannaschii).